The following is a 445-amino-acid chain: FAS-associated factor 2-A (445 aa).

One can recognise a UBA domain in the interval 12–53; that stretch reads EQTEKLLQFQDLTGIESMDQCRQTLQQHNWNIEAAVQDRLNE. The stretch at 275-353 forms a coiled coil; sequence SERLEREERN…ERKSECLPAE (79 aa). The segment at 302–354 is disordered; that stretch reads RADQEKERKKKEKQEQKRREEEEAQRKQMLEERKKRNLEEEKERKSECLPAEP. Over residues 303 to 348 the composition is skewed to basic and acidic residues; it reads ADQEKERKKKEKQEQKRREEEEAQRKQMLEERKKRNLEEEKERKSE. A UBX domain is found at 357–439; the sequence is DHPDNVKIIF…GLSQSQLLFV (83 aa).

It localises to the cytoplasm. The protein resides in the lipid droplet. Its subcellular location is the endoplasmic reticulum. Its function is as follows. Plays an important role in endoplasmic reticulum-associated degradation (ERAD) that mediates ubiquitin-dependent degradation of misfolded endoplasmic reticulum proteins. Involved in inhibition of lipid droplet degradation. Involved in stress granule disassembly. This Xenopus laevis (African clawed frog) protein is FAS-associated factor 2-A (faf2-a).